The chain runs to 347 residues: Histone deacetylase 11 (347 aa).

The histone deacetylase stretch occupies residues 14 to 318; the sequence is TRWPIVYSPR…ARIIADSILN (305 aa). His-143 is a catalytic residue.

It belongs to the histone deacetylase family. As to quaternary structure, interacts with HDAC6.

It is found in the nucleus. The catalysed reaction is N(6)-acetyl-L-lysyl-[histone] + H2O = L-lysyl-[histone] + acetate. In terms of biological role, responsible for the deacetylation of lysine residues on the N-terminal part of the core histones (H2A, H2B, H3 and H4). Histone deacetylation gives a tag for epigenetic repression and plays an important role in transcriptional regulation, cell cycle progression and developmental events. Histone deacetylases act via the formation of large multiprotein complexes. In Macaca fascicularis (Crab-eating macaque), this protein is Histone deacetylase 11 (HDAC11).